Consider the following 304-residue polypeptide: Kazal-type serine protease inhibitor domain-containing protein 1 (304 aa).

Positions 1–30 (MLPPPRPAAALALPVLLLLLVVLTPPPTGA) are cleaved as a signal peptide. Residues 49–129 (EGEGCAPCRP…EVPEPLCACR (81 aa)) enclose the IGFBP N-terminal domain. Cystine bridges form between Cys53–Cys76, Cys56–Cys78, Cys61–Cys79, Cys67–Cys82, Cys90–Cys108, Cys102–Cys126, and Cys135–Cys168. The region spanning 120 to 170 (EVPEPLCACRSQSPLCGSDGHTYSQICRLQEAARARPDANLTVAHPGPCES) is the Kazal-like domain. N-linked (GlcNAc...) asparagine glycosylation is found at Asn159 and Asn183. Positions 172-269 (PQIVSHPYDT…GQVEAPASLT (98 aa)) constitute an Ig-like C2-type domain. A disulfide bridge links Cys193 with Cys253. A glycan (N-linked (GlcNAc...) asparagine) is linked at Asn277.

It is found in the secreted. It localises to the extracellular space. The protein resides in the extracellular matrix. Its function is as follows. Involved in the proliferation of osteoblasts during bone formation and bone regeneration. Promotes matrix assembly. The polypeptide is Kazal-type serine protease inhibitor domain-containing protein 1 (KAZALD1) (Homo sapiens (Human)).